A 1024-amino-acid polypeptide reads, in one-letter code: Error-prone DNA polymerase (1024 aa).

Belongs to the DNA polymerase type-C family. DnaE2 subfamily.

It is found in the cytoplasm. It catalyses the reaction DNA(n) + a 2'-deoxyribonucleoside 5'-triphosphate = DNA(n+1) + diphosphate. DNA polymerase involved in damage-induced mutagenesis and translesion synthesis (TLS). It is not the major replicative DNA polymerase. The sequence is that of Error-prone DNA polymerase from Vibrio vulnificus (strain YJ016).